We begin with the raw amino-acid sequence, 383 residues long: Opsin Rh3 (383 aa).

Topologically, residues 1–57 are extracellular; it reads MESGNVSSSLFGNVSTALRPEARLSAETRLLGWNVPPEELRHIPEHWLTYPEPPESM. Residue asparagine 13 is glycosylated (N-linked (GlcNAc...) asparagine). The chain crosses the membrane as a helical span at residues 58–82; the sequence is NYLLGTLYIFFTLMSMLGNGLVIWV. The Cytoplasmic segment spans residues 83–94; it reads FSAAKSLRTPSN. The helical transmembrane segment at 95 to 119 threads the bilayer; sequence ILVINLAFCDFMMMVKTPIFIYNSF. The Extracellular portion of the chain corresponds to 120–133; sequence HQGYALGHLGCQIF. Cysteine 130 and cysteine 207 are joined by a disulfide. Residues 134–153 traverse the membrane as a helical segment; the sequence is GIIGSYTGIAAGATNAFIAY. At 154–171 the chain is on the cytoplasmic side; it reads DRFNVITRPMEGKMTHGK. Residues 172–196 form a helical membrane-spanning segment; the sequence is AIAMIIFIYMYATPWVVACYTETWG. Residues 197-220 are Extracellular-facing; sequence RFVPEGYLTSCTFDYLTDNFDTRL. A helical membrane pass occupies residues 221 to 248; it reads FVACIFFFSFVCPTTMITYYYSQIVGHV. Residues 249 to 284 lie on the Cytoplasmic side of the membrane; sequence FSHEKALRDQAKKMNVESLRSNVDKNKETAEIRIAK. The chain crosses the membrane as a helical span at residues 285-308; the sequence is AAITICFLFFCSWTPYGVMSLIGA. Topologically, residues 309 to 316 are extracellular; sequence FGDKTLLT. Residues 317–341 traverse the membrane as a helical segment; sequence PGATMIPACACKMVACIDPFVYAIS. Lysine 328 is subject to N6-(retinylidene)lysine. Over 342–383 the chain is Cytoplasmic; the sequence is HPRYRMELQKRCPWLALNEKAPESSAVASTSTTQEPQQTTAA. The segment at 362–383 is disordered; that stretch reads APESSAVASTSTTQEPQQTTAA. Residues 369–383 are compositionally biased toward low complexity; that stretch reads ASTSTTQEPQQTTAA.

The protein belongs to the G-protein coupled receptor 1 family. Opsin subfamily. Phosphorylated on some or all of the serine and threonine residues present in the C-terminal region.

The protein resides in the membrane. Functionally, visual pigments are the light-absorbing molecules that mediate vision. They consist of an apoprotein, opsin, covalently linked to cis-retinal. This is Opsin Rh3 (Rh3) from Drosophila melanogaster (Fruit fly).